The primary structure comprises 125 residues: Type II secretion system protein I (125 aa).

A propeptide spans 1–5 (leader sequence); sequence MKQQG. At Met-6 the chain carries N-methylmethionine. Residues 6 to 26 form a helical membrane-spanning segment; it reads MTLLEVMVALVIFALAGLTVL.

Belongs to the GSP I family. Type II secretion is composed of four main components: the outer membrane complex, the inner membrane complex, the cytoplasmic secretion ATPase and the periplasm-spanning pseudopilus. Interacts with core component OutG. Cleaved by prepilin peptidase. Post-translationally, methylated by prepilin peptidase at the amino group of the N-terminal methionine once the leader sequence is cleaved by prepilin peptidase.

Its subcellular location is the cell inner membrane. Its function is as follows. Component of the type II secretion system required for the energy-dependent secretion of extracellular factors such as proteases and toxins from the periplasm. Part of the pseudopilus tip complex that is critical for the recognition and binding of secretion substrates. In Dickeya chrysanthemi (Pectobacterium chrysanthemi), this protein is Type II secretion system protein I (outI).